Here is a 197-residue protein sequence, read N- to C-terminus: Amino-terminal enhancer of split (197 aa).

A compositionally biased stretch (low complexity) spans 1-15 (MMFPQSSSRHSGSSH). 2 disordered regions span residues 1–20 (MMFPQSSSRHSGSSHMPQQL) and 169–197 (LGSQGHLPKEDKNGHEGDRRPDDDGDKSD). Residues 166–197 (LSALGSQGHLPKEDKNGHEGDRRPDDDGDKSD) are CCN domain. Over residues 175-197 (LPKEDKNGHEGDRRPDDDGDKSD) the composition is skewed to basic and acidic residues.

Belongs to the WD repeat Groucho/TLE family. Monomer. Ubiquitinated by XIAP/BIRC4. In terms of tissue distribution, predominantly expressed in brain, testis and ovary. Ubiquitously expressed in the developing embryo. Present in unfertilized and fertilized eggs.

Its subcellular location is the nucleus. In terms of biological role, may act as a transcriptional corepressor. Has a possible role in the negative regulation of proteins containing WD-40 repeats. May be required for the initiation and maintenance of the differentiated state. The polypeptide is Amino-terminal enhancer of split (aes) (Xenopus laevis (African clawed frog)).